The following is a 486-amino-acid chain: UDP-N-acetylmuramate--L-alanine ligase (486 aa).

Residue 129-135 (GTHGKTT) coordinates ATP.

The protein belongs to the MurCDEF family.

The protein localises to the cytoplasm. The catalysed reaction is UDP-N-acetyl-alpha-D-muramate + L-alanine + ATP = UDP-N-acetyl-alpha-D-muramoyl-L-alanine + ADP + phosphate + H(+). It functions in the pathway cell wall biogenesis; peptidoglycan biosynthesis. In terms of biological role, cell wall formation. This is UDP-N-acetylmuramate--L-alanine ligase from Vibrio cholerae serotype O1 (strain ATCC 39315 / El Tor Inaba N16961).